Reading from the N-terminus, the 177-residue chain is Large ribosomal subunit protein uL6 (177 aa).

It belongs to the universal ribosomal protein uL6 family. As to quaternary structure, part of the 50S ribosomal subunit.

In terms of biological role, this protein binds to the 23S rRNA, and is important in its secondary structure. It is located near the subunit interface in the base of the L7/L12 stalk, and near the tRNA binding site of the peptidyltransferase center. The protein is Large ribosomal subunit protein uL6 of Histophilus somni (strain 2336) (Haemophilus somnus).